The following is a 251-amino-acid chain: Cell division protein ZapD (251 aa).

It belongs to the ZapD family. Interacts with FtsZ.

It is found in the cytoplasm. Functionally, cell division factor that enhances FtsZ-ring assembly. Directly interacts with FtsZ and promotes bundling of FtsZ protofilaments, with a reduction in FtsZ GTPase activity. This is Cell division protein ZapD from Burkholderia thailandensis (strain ATCC 700388 / DSM 13276 / CCUG 48851 / CIP 106301 / E264).